A 76-amino-acid polypeptide reads, in one-letter code: Small ribosomal subunit protein bS18 (76 aa).

The protein belongs to the bacterial ribosomal protein bS18 family. In terms of assembly, part of the 30S ribosomal subunit. Forms a tight heterodimer with protein bS6.

Functionally, binds as a heterodimer with protein bS6 to the central domain of the 16S rRNA, where it helps stabilize the platform of the 30S subunit. This chain is Small ribosomal subunit protein bS18, found in Ectopseudomonas mendocina (strain ymp) (Pseudomonas mendocina).